Consider the following 317-residue polypeptide: Olfactory receptor 2F1 (317 aa).

At 1-24 the chain is on the extracellular side; sequence MGTDNQTWVSEFILLGLSSDWDTR. N-linked (GlcNAc...) asparagine glycosylation occurs at Asn-5. The helical transmembrane segment at 25-48 threads the bilayer; sequence VSLFVLFLVMYVVTVLGNCLIVLL. At 49–57 the chain is on the cytoplasmic side; it reads IRLDSRLHT. A helical membrane pass occupies residues 58–79; it reads PMYFFLTNLSLVDVSYATSVVP. Over 80-100 the chain is Extracellular; the sequence is QLLAHFLAEHKAIPFQSCAAQ. Residues Cys-97 and Cys-189 are joined by a disulfide bond. The chain crosses the membrane as a helical span at residues 101 to 120; sequence LFFSLALGGIEFVLLAVMAY. The Cytoplasmic portion of the chain corresponds to 121–139; that stretch reads DRYVAVCDALRYSAIMHGG. The chain crosses the membrane as a helical span at residues 140–160; that stretch reads LCARLAITSWVSGFISSPVQT. The Extracellular segment spans residues 161–200; that stretch reads AITFQLPMCRNKFIDHISCELLAVVRLACVDTSSNEVTIM. Residues 201–222 form a helical membrane-spanning segment; the sequence is VSSIVLLMTPFCLVLLSYIQII. Residues 223–236 are Cytoplasmic-facing; it reads STILKIQSREGRKK. A helical membrane pass occupies residues 237-261; sequence AFHTCASHLTVVALCYGVAIFTYIQ. At 262–272 the chain is on the extracellular side; that stretch reads PHSSPSVLQEK. The chain crosses the membrane as a helical span at residues 273-292; the sequence is LFSVFYAILTPMLNPMIYSL. The Cytoplasmic portion of the chain corresponds to 293–317; that stretch reads RNKEVKGAWQKLLWKFSGLTSKLAT.

Belongs to the G-protein coupled receptor 1 family.

The protein resides in the cell membrane. In terms of biological role, odorant receptor. This Homo sapiens (Human) protein is Olfactory receptor 2F1 (OR2F1).